Consider the following 91-residue polypeptide: MPRSLKKGPFVDAHLFAKVEAAVASNSRKPIKTWSRRSMILPDFVGLTISVHNGRNHVPVIVTEHMVGHKLGEFAPTRTYRGHGVDKKSKR.

The protein belongs to the universal ribosomal protein uS19 family.

Its function is as follows. Protein S19 forms a complex with S13 that binds strongly to the 16S ribosomal RNA. The protein is Small ribosomal subunit protein uS19 of Acinetobacter baumannii (strain AB307-0294).